Consider the following 203-residue polypeptide: Holliday junction branch migration complex subunit RuvA (203 aa).

Residues 1–64 (MIGRLRGIVL…EDAQLLFGFN (64 aa)) form a domain I region. The segment at 65 to 142 (NKQERTLFRE…KGLHGDLFTP (78 aa)) is domain II. Positions 143–154 (AADLVLTSPASP) are flexible linker. The domain III stretch occupies residues 155 to 203 (AVDDAEAEAVAALVSLGYKPQEASRMVSKVAQADASSETLIREALRAAL).

It belongs to the RuvA family. In terms of assembly, homotetramer. Forms an RuvA(8)-RuvB(12)-Holliday junction (HJ) complex. HJ DNA is sandwiched between 2 RuvA tetramers; dsDNA enters through RuvA and exits via RuvB. An RuvB hexamer assembles on each DNA strand where it exits the tetramer. Each RuvB hexamer is contacted by two RuvA subunits (via domain III) on 2 adjacent RuvB subunits; this complex drives branch migration. In the full resolvosome a probable DNA-RuvA(4)-RuvB(12)-RuvC(2) complex forms which resolves the HJ.

It localises to the cytoplasm. Functionally, the RuvA-RuvB-RuvC complex processes Holliday junction (HJ) DNA during genetic recombination and DNA repair, while the RuvA-RuvB complex plays an important role in the rescue of blocked DNA replication forks via replication fork reversal (RFR). RuvA specifically binds to HJ cruciform DNA, conferring on it an open structure. The RuvB hexamer acts as an ATP-dependent pump, pulling dsDNA into and through the RuvAB complex. HJ branch migration allows RuvC to scan DNA until it finds its consensus sequence, where it cleaves and resolves the cruciform DNA. The polypeptide is Holliday junction branch migration complex subunit RuvA (Cronobacter sakazakii (strain ATCC BAA-894) (Enterobacter sakazakii)).